A 45-amino-acid polypeptide reads, in one-letter code: GKCADAWKSCDNLPCCVVNGYSRTCMCSANRCNCEETKKLREHFG.

4 disulfides stabilise this stretch: C3–C16, C10–C25, C15–C34, and C27–C32.

As to expression, expressed by the venom gland.

The protein resides in the secreted. Neurotoxin. Causes rapid general flaccid paralysis and death in mice at dose levels of 5 ug per mouse. This chain is U1-ctenitoxin-Pk1a, found in Phoneutria keyserlingi (Brazilian wandering spider).